The primary structure comprises 167 residues: Low molecular mass early light-inducible protein HV60, chloroplastic (167 aa).

The N-terminal 33 residues, 1–33, are a transit peptide targeting the chloroplast; it reads MATMMAMSSFAGAAVLPRGSARSLPALGRRTLV. 2 consecutive transmembrane segments (helical) span residues 101 to 121 and 145 to 165; these read GQAWFAYTVAMLSMASLVPLL and FAMIGLVALAATEIITGTPFI.

Belongs to the ELIP/psbS family.

The protein resides in the plastid. It localises to the chloroplast membrane. In terms of biological role, probably involved in the integration of pigments into the mature pigment-protein complexes. The polypeptide is Low molecular mass early light-inducible protein HV60, chloroplastic (Hordeum vulgare (Barley)).